The following is a 439-amino-acid chain: Chitinase-like protein Idgf1 (439 aa).

Residues 1 to 20 form the signal peptide; it reads MRFQLFYILGLLSVTSLTHA. Residues 22–439 enclose the GH18 domain; sequence SNLICYYDSN…ILRSIKYFMG (418 aa). Cys-26 and Cys-53 are disulfide-bonded. 3 N-linked (GlcNAc...) asparagine glycosylation sites follow: Asn-122, Asn-218, and Asn-346. An intrachain disulfide couples Cys-340 to Cys-423.

This sequence belongs to the glycosyl hydrolase 18 family. IDGF subfamily. As to expression, primarily expressed in yolk cells and fat body. In larvae, it is expressed in large salivary gland cells and weakly expressed in imaginal disks. Less expressed than Idgf2 and Idgf4.

It localises to the secreted. Its function is as follows. Cooperates with insulin-like peptides to stimulate the proliferation, polarization and motility of imaginal disk cells. May act by stabilizing the binding of insulin-like peptides to its receptor through a simultaneous interaction with both molecules to form a multiprotein signaling complex. This chain is Chitinase-like protein Idgf1 (Idgf1), found in Drosophila melanogaster (Fruit fly).